A 412-amino-acid polypeptide reads, in one-letter code: 2,3-bisphosphoglycerate-independent phosphoglycerate mutase (412 aa).

The protein belongs to the BPG-independent phosphoglycerate mutase family. A-PGAM subfamily.

It carries out the reaction (2R)-2-phosphoglycerate = (2R)-3-phosphoglycerate. Its pathway is carbohydrate degradation; glycolysis; pyruvate from D-glyceraldehyde 3-phosphate: step 3/5. Catalyzes the interconversion of 2-phosphoglycerate and 3-phosphoglycerate. The chain is 2,3-bisphosphoglycerate-independent phosphoglycerate mutase (apgM) from Pyrococcus horikoshii (strain ATCC 700860 / DSM 12428 / JCM 9974 / NBRC 100139 / OT-3).